The chain runs to 216 residues: Protein Syd (216 aa).

Belongs to the Syd family.

It localises to the cell inner membrane. In terms of biological role, interacts with the SecY protein in vivo. May bind preferentially to an uncomplexed state of SecY, thus functioning either as a chelating agent for excess SecY in the cell or as a regulatory factor that negatively controls the translocase function. The polypeptide is Protein Syd (Shewanella baltica (strain OS195)).